The following is a 596-amino-acid chain: M-phase inducer phosphatase (596 aa).

Phosphoserine occurs at positions 99 and 178. The segment at 174–221 (LSSSSFDSYLRPNVSRSRSSGNAPPFLRSRSSSSYSINKKKGTSGGQA) is disordered. Positions 429-533 (IFDKCIIIDC…FYENHKNRCD (105 aa)) constitute a Rhodanese domain. Catalysis depends on cysteine 480, which acts as the Phosphocysteine intermediate.

Belongs to the MPI phosphatase family. In terms of assembly, interacts with rad24 during G2 in a srk1-dependent manner; the interaction is increased during osmostress. Phosphorylated by srk1 in the N-terminus; phosphorylation promotes nuclear exclusion.

The protein localises to the cytoplasm. The protein resides in the nucleus. The enzyme catalyses O-phospho-L-tyrosyl-[protein] + H2O = L-tyrosyl-[protein] + phosphate. Functionally, tyrosine protein phosphatase which functions as a dosage-dependent inducer of mitotic and meiotic progression. Directly dephosphorylates cdc2 and stimulates its kinase activity. Required for the G2/M transition of the cell cycle. Required for induction of meiosis II. This is M-phase inducer phosphatase from Schizosaccharomyces pombe (strain 972 / ATCC 24843) (Fission yeast).